The primary structure comprises 223 residues: ATP phosphoribosyltransferase (223 aa).

The protein belongs to the ATP phosphoribosyltransferase family. Short subfamily. In terms of assembly, heteromultimer composed of HisG and HisZ subunits.

Its subcellular location is the cytoplasm. The enzyme catalyses 1-(5-phospho-beta-D-ribosyl)-ATP + diphosphate = 5-phospho-alpha-D-ribose 1-diphosphate + ATP. The protein operates within amino-acid biosynthesis; L-histidine biosynthesis; L-histidine from 5-phospho-alpha-D-ribose 1-diphosphate: step 1/9. Its function is as follows. Catalyzes the condensation of ATP and 5-phosphoribose 1-diphosphate to form N'-(5'-phosphoribosyl)-ATP (PR-ATP). Has a crucial role in the pathway because the rate of histidine biosynthesis seems to be controlled primarily by regulation of HisG enzymatic activity. This is ATP phosphoribosyltransferase from Desulfitobacterium hafniense (strain Y51).